We begin with the raw amino-acid sequence, 206 residues long: Small ribosomal subunit protein uS4A (206 aa).

One can recognise an S4 RNA-binding domain in the interval 98–164; sequence MRLDNVVYRL…EKFKTFAENP (67 aa).

Belongs to the universal ribosomal protein uS4 family. In terms of assembly, part of the 30S ribosomal subunit. Contacts protein S5. The interaction surface between S4 and S5 is involved in control of translational fidelity.

In terms of biological role, one of the primary rRNA binding proteins, it binds directly to 16S rRNA where it nucleates assembly of the body of the 30S subunit. With S5 and S12 plays an important role in translational accuracy. In Clostridium botulinum (strain ATCC 19397 / Type A), this protein is Small ribosomal subunit protein uS4A.